The following is a 300-amino-acid chain: Phosphatidylserine decarboxylase proenzyme (300 aa).

Catalysis depends on charge relay system; for autoendoproteolytic cleavage activity residues Asp113, His169, and Ser256. The active-site Schiff-base intermediate with substrate; via pyruvic acid; for decarboxylase activity is the Ser256. The residue at position 256 (Ser256) is a Pyruvic acid (Ser); by autocatalysis.

The protein belongs to the phosphatidylserine decarboxylase family. PSD-B subfamily. Prokaryotic type II sub-subfamily. Heterodimer of a large membrane-associated beta subunit and a small pyruvoyl-containing alpha subunit. Requires pyruvate as cofactor. In terms of processing, is synthesized initially as an inactive proenzyme. Formation of the active enzyme involves a self-maturation process in which the active site pyruvoyl group is generated from an internal serine residue via an autocatalytic post-translational modification. Two non-identical subunits are generated from the proenzyme in this reaction, and the pyruvate is formed at the N-terminus of the alpha chain, which is derived from the carboxyl end of the proenzyme. The autoendoproteolytic cleavage occurs by a canonical serine protease mechanism, in which the side chain hydroxyl group of the serine supplies its oxygen atom to form the C-terminus of the beta chain, while the remainder of the serine residue undergoes an oxidative deamination to produce ammonia and the pyruvoyl prosthetic group on the alpha chain. During this reaction, the Ser that is part of the protease active site of the proenzyme becomes the pyruvoyl prosthetic group, which constitutes an essential element of the active site of the mature decarboxylase.

The protein localises to the cell membrane. The catalysed reaction is a 1,2-diacyl-sn-glycero-3-phospho-L-serine + H(+) = a 1,2-diacyl-sn-glycero-3-phosphoethanolamine + CO2. It participates in phospholipid metabolism; phosphatidylethanolamine biosynthesis; phosphatidylethanolamine from CDP-diacylglycerol: step 2/2. Functionally, catalyzes the formation of phosphatidylethanolamine (PtdEtn) from phosphatidylserine (PtdSer). This is Phosphatidylserine decarboxylase proenzyme from Ruminiclostridium cellulolyticum (strain ATCC 35319 / DSM 5812 / JCM 6584 / H10) (Clostridium cellulolyticum).